We begin with the raw amino-acid sequence, 861 residues long: ToMV resistance protein Tm-2(GCR236) (861 aa).

Positions 63–83 (VKNLLKDIQELAGDVEDLLDD) form a coiled coil. In terms of domain architecture, NB-ARC spans 162 to 388 (DDFNMLQAKL…LESMGHKVQD (227 aa)). 185 to 192 (GMPGLGKT) contributes to the ATP binding site. 13 LRR repeats span residues 225–248 (LDIAKQIGLTEQKMKENLEDNLRS), 305–327 (LHALQPLESEKSFELFTKKIFNF), 388–411 (DGCAKVLALSYNDLPIASRPCFLY), 449–472 (LAEDVLNDLVSRNLIQLAKRTYNG), 510–536 (VARLRRITFYSDNVMIEFFRSNPKLEK), 585–608 (MTCLRYLRLEGNICGKLPNSIVKL), 609–631 (TRLETIDIDRRSLIQPPSGVWES), 652–680 (ISSFYPNIYSLHPNNLQTLMWIPDKFFEP), 689–710 (LRKLGILGVSNSTVKMLSIFSP), 712–735 (LKALEVLKLSFSSDPSEQIKLSSY), 736–758 (PHIAKLHLNVNRTMALNSQSFPP), 784–810 (LRKLKMFICKYNEEKMDLSGEANGYSF), and 811–835 (PQLEVLHIHSPNGLSEVTCTDDVSM).

The protein belongs to the disease resistance NB-LRR family. As to quaternary structure, (Microbial infection) Interacts with tobamoviruses mouvement protein at the plasma membrane; this interaction triggers defense responses leading to programmed cell death. In terms of assembly, binds to HSP90 proteins; this interaction seems required for defense responses toward tobamoviruses.

It is found in the cell membrane. Its function is as follows. Inhibitor of viral mouvements which confers resistance to some tobamoviruses including tomato mosaic virus (ToMV) (e.g. isolates L, W3 and SL-1) and tobacco mosaic virus (TMV), but not to resistance-breaking isolates (e.g. B7, LT1, LII, Ltbl, ToMV2, and ToMV1-2) ToMV and tomato brown rugose fruit virus (ToBRFV). Elicits a hypersensitive reaction in response to avirulent (Avr) movement proteins from resistance inducing tobamoviruses (e.g. ToMV and TMV) strains, thus leading to programmed cell death. In Solanum lycopersicum (Tomato), this protein is ToMV resistance protein Tm-2(GCR236).